The chain runs to 232 residues: 5'-methylthioadenosine/S-adenosylhomocysteine nucleosidase (232 aa).

Glutamate 12 serves as the catalytic Proton acceptor. Substrate contacts are provided by residues glycine 78, isoleucine 152, and 173 to 174; that span reads ME. Aspartate 197 functions as the Proton donor in the catalytic mechanism.

The protein belongs to the PNP/UDP phosphorylase family. MtnN subfamily. As to quaternary structure, homodimer.

It catalyses the reaction S-adenosyl-L-homocysteine + H2O = S-(5-deoxy-D-ribos-5-yl)-L-homocysteine + adenine. The catalysed reaction is S-methyl-5'-thioadenosine + H2O = 5-(methylsulfanyl)-D-ribose + adenine. The enzyme catalyses 5'-deoxyadenosine + H2O = 5-deoxy-D-ribose + adenine. It participates in amino-acid biosynthesis; L-methionine biosynthesis via salvage pathway; S-methyl-5-thio-alpha-D-ribose 1-phosphate from S-methyl-5'-thioadenosine (hydrolase route): step 1/2. Catalyzes the irreversible cleavage of the glycosidic bond in both 5'-methylthioadenosine (MTA) and S-adenosylhomocysteine (SAH/AdoHcy) to adenine and the corresponding thioribose, 5'-methylthioribose and S-ribosylhomocysteine, respectively. Also cleaves 5'-deoxyadenosine, a toxic by-product of radical S-adenosylmethionine (SAM) enzymes, into 5-deoxyribose and adenine. Thus, is required for in vivo function of the radical SAM enzymes biotin synthase and lipoic acid synthase, that are inhibited by 5'-deoxyadenosine accumulation. The protein is 5'-methylthioadenosine/S-adenosylhomocysteine nucleosidase of Citrobacter koseri (strain ATCC BAA-895 / CDC 4225-83 / SGSC4696).